The sequence spans 220 residues: GTP cyclohydrolase 1 (220 aa).

Cysteine 109, histidine 112, and cysteine 180 together coordinate Zn(2+).

Belongs to the GTP cyclohydrolase I family. In terms of assembly, homomer.

It catalyses the reaction GTP + H2O = 7,8-dihydroneopterin 3'-triphosphate + formate + H(+). Its pathway is cofactor biosynthesis; 7,8-dihydroneopterin triphosphate biosynthesis; 7,8-dihydroneopterin triphosphate from GTP: step 1/1. The sequence is that of GTP cyclohydrolase 1 from Pectobacterium carotovorum subsp. carotovorum (strain PC1).